A 126-amino-acid polypeptide reads, in one-letter code: MLLNRTSFVTLFAAGMLVSALAQAHPKLVSSTPAEGSEGAAPAKIELHFSENLVTQFSGAKLVMTAMPGMEHSPMAVKAAVSGGGDPKTMVITPASPLTAGTYKVDWRAVSSDTHPITGSVTFKVK.

The first 24 residues, 1–24, serve as a signal peptide directing secretion; sequence MLLNRTSFVTLFAAGMLVSALAQA. Cu(2+) is bound at residue histidine 25. Cu(+) is bound by residues methionine 64, methionine 67, methionine 70, histidine 72, and methionine 75. Cu(2+) is bound at residue histidine 115.

The protein belongs to the CopC family. Monomer.

The protein resides in the periplasm. Its activity is regulated as follows. The redox state of copper bound to CopC may act as a switch between the possible trafficking pathways of the metal ion. Functionally, copper-binding protein involved in copper resistance and homeostasis. Probably mediates copper resistance by sequestering the excess of copper in the periplasm. May act as a copper carrier in the oxidizing periplasmic space that exchanges either Cu(I) or Cu(II) with its putative partners CopA, CopB and CopD. This is Copper resistance protein C from Pseudomonas syringae pv. tomato.